The following is a 642-amino-acid chain: Threonine--tRNA ligase (642 aa).

A TGS domain is found at 1–61; that stretch reads MPVITLPDGS…ESDAQLAIIT (61 aa). A catalytic region spans residues 243 to 534; it reads DHRKIGKQLD…LTEEYAGFFP (292 aa). Positions 334, 385, and 511 each coordinate Zn(2+).

It belongs to the class-II aminoacyl-tRNA synthetase family. In terms of assembly, homodimer. Requires Zn(2+) as cofactor.

It localises to the cytoplasm. The enzyme catalyses tRNA(Thr) + L-threonine + ATP = L-threonyl-tRNA(Thr) + AMP + diphosphate + H(+). In terms of biological role, catalyzes the attachment of threonine to tRNA(Thr) in a two-step reaction: L-threonine is first activated by ATP to form Thr-AMP and then transferred to the acceptor end of tRNA(Thr). Also edits incorrectly charged L-seryl-tRNA(Thr). This Yersinia enterocolitica serotype O:8 / biotype 1B (strain NCTC 13174 / 8081) protein is Threonine--tRNA ligase.